Consider the following 343-residue polypeptide: tRNA N6-adenosine threonylcarbamoyltransferase (343 aa).

Residues His116 and His120 each contribute to the Fe cation site. Residues 138-142 (LVSGG), Asp172, Gly185, Asp189, and Asn277 each bind substrate. Asp305 lines the Fe cation pocket.

Belongs to the KAE1 / TsaD family. Fe(2+) serves as cofactor.

The protein resides in the cytoplasm. It catalyses the reaction L-threonylcarbamoyladenylate + adenosine(37) in tRNA = N(6)-L-threonylcarbamoyladenosine(37) in tRNA + AMP + H(+). Functionally, required for the formation of a threonylcarbamoyl group on adenosine at position 37 (t(6)A37) in tRNAs that read codons beginning with adenine. Is involved in the transfer of the threonylcarbamoyl moiety of threonylcarbamoyl-AMP (TC-AMP) to the N6 group of A37, together with TsaE and TsaB. TsaD likely plays a direct catalytic role in this reaction. This chain is tRNA N6-adenosine threonylcarbamoyltransferase, found in Mycobacterium ulcerans (strain Agy99).